A 517-amino-acid polypeptide reads, in one-letter code: Sphingolipid C9-methyltransferase A (517 aa).

2 helical membrane-spanning segments follow: residues 58–78 (LLIL…GGGL) and 80–100 (TTIF…WSIA). Residues 223 to 224 (YT), 286 to 291 (TLGRNQ), and 316 to 317 (YR) each bind S-adenosyl-L-methionine. N-linked (GlcNAc...) asparagine glycosylation is present at asparagine 290. Asparagine 478 carries an N-linked (GlcNAc...) asparagine glycan.

It belongs to the CFA/CMAS family.

It localises to the membrane. It carries out the reaction a (4E,8E)-4-sphinga-4,8-dienine ceramide + S-adenosyl-L-methionine = a 9-methyl-(4E,8E)-sphinga-4,8-dienine ceramide + S-adenosyl-L-homocysteine + H(+). It participates in lipid metabolism; sphingolipid metabolism. Functionally, catalyzes methylation of the sphingoid base component of glucosylceramides (GluCers) at the C9-position. Sphingolipid C9-methylation requires 4,8-desaturated ceramides as substrates. Glucosylceramides play important roles in growth, differentiation and pathogenicity. The methyl group at the C9-position distinguishes fungal glucosylceramides from those of plants and animals and may thus play a role in host-pathogen interactions enabling the host to recognize the fungal attack and initiate specific defense responses. The chain is Sphingolipid C9-methyltransferase A from Emericella nidulans (strain FGSC A4 / ATCC 38163 / CBS 112.46 / NRRL 194 / M139) (Aspergillus nidulans).